Here is a 345-residue protein sequence, read N- to C-terminus: 4-hydroxy-2-oxovalerate aldolase 1 (345 aa).

The Pyruvate carboxyltransferase domain maps to 9-261; that stretch reads IRVTDTSLRD…RTGIDFFAIA (253 aa). Residue 17 to 18 coordinates substrate; sequence RD. Residue D18 coordinates Mn(2+). Residue H21 is the Proton acceptor of the active site. Positions 171 and 200 each coordinate substrate. Mn(2+)-binding residues include H200 and H202. Position 291 (Y291) interacts with substrate.

The protein belongs to the 4-hydroxy-2-oxovalerate aldolase family.

It carries out the reaction (S)-4-hydroxy-2-oxopentanoate = acetaldehyde + pyruvate. The protein is 4-hydroxy-2-oxovalerate aldolase 1 of Nocardia farcinica (strain IFM 10152).